A 170-amino-acid chain; its full sequence is Translocon-associated protein subunit gamma (170 aa).

Over 1–24 the chain is Lumenal; sequence MAEVDEFSAFRHENDVSIEQRIVY. Residues 25–45 form a helical membrane-spanning segment; that stretch reads FINSLIVALVPVYLYHAIFFM. At 46 to 51 the chain is on the cytoplasmic side; that stretch reads SIDDHM. The helical transmembrane segment at 52–72 threads the bilayer; the sequence is IIYGSVTLFAAIVLTFAYNNI. The Lumenal segment spans residues 73 to 121; sequence YRMKRLKLSASREHISIASKNKVGDKKKFAAAQKEVQALVTSHEAIAAS. The helical transmembrane segment at 122–141 threads the bilayer; it reads IMYNNAVFLICVSIFSFIIF. Over 142–145 the chain is Cytoplasmic; it reads KNVP. Residues 146–168 form a helical membrane-spanning segment; sequence LVYNYIISISLGAGLTSFLSTSS.

This sequence belongs to the TRAP-gamma family. Heterotrimer of TRAP-alpha, TRAP-beta and TRAP-gamma.

Its subcellular location is the endoplasmic reticulum membrane. TRAP proteins are part of a complex whose function is to bind calcium to the ER membrane and thereby regulate the retention of ER resident proteins. This Dictyostelium discoideum (Social amoeba) protein is Translocon-associated protein subunit gamma (ssr3).